The chain runs to 157 residues: MAEKLRMAARVFVYGTLKRGEPNHHWLTKKENGQARFLGRGKTETKFPLVVGTRYNIPFLLARPGEGNHIEGEVYEVDETMLSKLDILEDYPDYYDREQQTILMEQNETIQCWLYLIRNFPDKMLAKELLISYHNTPERPYNEKSVRTVSARDDLSY.

14–17 is a binding site for substrate; it reads YGTL. The active-site Proton acceptor is Glu89.

The protein belongs to the gamma-glutamylcyclotransferase family.

Its function is as follows. Putative gamma-glutamylcyclotransferase. In Drosophila melanogaster (Fruit fly), this protein is Putative gamma-glutamylcyclotransferase CG2811.